We begin with the raw amino-acid sequence, 914 residues long: UPF0182 protein PTH_1387 (914 aa).

A run of 7 helical transmembrane segments spans residues 7–27 (FAAY…IAGA), 48–68 (IIIS…VLLF), 109–129 (LLLL…NFTV), 173–193 (INWV…VVYF), 209–229 (YHFS…YQLE), 252–272 (TLLA…AILI), and 281–301 (LVIY…GIYP).

This sequence belongs to the UPF0182 family.

It localises to the cell membrane. This Pelotomaculum thermopropionicum (strain DSM 13744 / JCM 10971 / SI) protein is UPF0182 protein PTH_1387.